The sequence spans 950 residues: Coatomer subunit beta-2 (950 aa).

5 HEAT repeats span residues 92–126 (PEMI…LSEP), 127–164 (EVLE…LPHG), 275–312 (TAVR…TSHR), 313–350 (DVMV…ARNV), and 392–429 (EVAG…TNPK).

Oligomeric complex that consists of at least the alpha, beta, beta', gamma, delta, epsilon and zeta subunits.

It is found in the cytoplasm. Its subcellular location is the golgi apparatus membrane. The protein localises to the cytoplasmic vesicle. The protein resides in the COPI-coated vesicle membrane. Its function is as follows. The coatomer is a cytosolic protein complex that binds to dilysine motifs and reversibly associates with Golgi non-clathrin-coated vesicles, which further mediate biosynthetic protein transport from the ER, via the Golgi up to the trans Golgi network. Coatomer complex is required for budding from Golgi membranes, and is essential for the retrograde Golgi-to-ER transport of dilysine-tagged proteins. In Oryza sativa subsp. japonica (Rice), this protein is Coatomer subunit beta-2.